The primary structure comprises 1073 residues: Duffy receptor alpha form (1073 aa).

The N-terminal stretch at 1-21 is a signal peptide; sequence MEGKKKRPLFFLLVLLLSHKA. Residues 22–1007 lie on the Extracellular side of the membrane; the sequence is NNVLFERMNG…YECFTKGSST (986 aa). Residues asparagine 134, asparagine 179, and asparagine 202 are each glycosylated (N-linked (GlcNAc...) asparagine). Disulfide bonds link cysteine 214-cysteine 243 and cysteine 227-cysteine 234. N-linked (GlcNAc...) asparagine glycosylation is found at asparagine 252 and asparagine 348. 4 disulfide bridges follow: cysteine 297/cysteine 374, cysteine 412/cysteine 429, cysteine 424/cysteine 504, and cysteine 433/cysteine 502. The segment at 517 to 915 is disordered; that stretch reads VKNVGSGVES…LNNRKLNRDQ (399 aa). Polar residues predominate over residues 528-543; it reads AASSNPITEAVKSSSG. Over residues 546–561 the composition is skewed to basic and acidic residues; that stretch reads KVQEDSAHKSVNKGEG. Positions 562–576 are enriched in polar residues; the sequence is KSSTNEADPGSQSGA. Basic and acidic residues-rich tracts occupy residues 675-710 and 717-734; these read GEVHNGTDTEPKEDGEKADPQKDIEVKGKQDTDDRS and HTDERATLGETHMEKDTE. An N-linked (GlcNAc...) asparagine glycan is attached at asparagine 679. Residues 736–766 show a composition bias toward polar residues; sequence AGGSTLTPEQNVSVASDNGNVPGSGNKQNEG. N-linked (GlcNAc...) asparagine glycans are attached at residues asparagine 746, asparagine 779, and asparagine 788. The span at 799–810 shows a compositional bias: basic and acidic residues; that stretch reads GNEKDFQKHDFM. 2 stretches are compositionally biased toward low complexity: residues 821 to 843 and 851 to 864; these read SDHTSSDQTSSDHTSSDQTSSDH and SDQTSSDQTSSDQT. Basic and acidic residues predominate over residues 867–891; sequence TEGHHRDNVRNPEIKSSEDMSKGDF. Positions 893-909 are enriched in polar residues; sequence RNSNSNELYSHNNLNNR. Residues 1008–1029 traverse the membrane as a helical segment; the sequence is GIVYFATGGAFLIILLLFASWN. The Cytoplasmic portion of the chain corresponds to 1030–1073; sequence AASNDYEEEATFDEFVEYSDDIHRTPLMPNDIEHMQQFTPLDYS.

In terms of assembly, interacts (via region II) with human ACKR1 (via N-terminal extracellular domain). Interacts (via region II) with rhesus macaque ACKR1 (via N-terminal extracellular domain).

It is found in the cell membrane. The protein resides in the cytoplasmic vesicle. It localises to the secretory vesicle. Its subcellular location is the microneme. Its function is as follows. Binds to the human erythrocyte Duffy blood group determinant (ACKR1). Binds to the rhesus macaque erythrocyte Duffy blood group determinant (ACKR1). The protein is Duffy receptor alpha form of Plasmodium knowlesi.